The chain runs to 24 residues: Protein YriA (24 aa).

The sequence is that of Protein YriA from Escherichia coli (strain K12).